We begin with the raw amino-acid sequence, 483 residues long: Endoplasmic reticulum lectin 1 (483 aa).

The signal sequence occupies residues 1–33 (MEEGGGGVRSLVPGGPVLLVLCGLLEASGGGRA). 2 MRH domains span residues 111–246 (SSCS…LCSH) and 342–469 (SYCF…ICKI). A disulfide bridge connects residues Cys-113 and Cys-126. An N-linked (GlcNAc...) asparagine glycan is attached at Asn-195. Cystine bridges form between Cys-199–Cys-232, Cys-215–Cys-244, Cys-344–Cys-357, Cys-421–Cys-455, and Cys-436–Cys-467.

May form a complex with OS9, HSPA5, SYVN1, and SEL1L with which it interacts directly. Interacts (via PRKCSH 2 domain) with KREMEN2 (when glycosylated). Interacts with HSPA5. Isoform 1 and isoform 2 are N-glycosylated.

Its subcellular location is the endoplasmic reticulum lumen. Functionally, probable lectin that binds selectively to improperly folded lumenal proteins. May function in endoplasmic reticulum quality control and endoplasmic reticulum-associated degradation (ERAD) of both non-glycosylated proteins and glycoproteins. The sequence is that of Endoplasmic reticulum lectin 1 (ERLEC1) from Homo sapiens (Human).